The following is a 616-amino-acid chain: Probable Xaa-Pro aminopeptidase P (616 aa).

4 residues coordinate Mn(2+): Asp413, Asp424, Glu522, and Glu536.

It belongs to the peptidase M24B family. It depends on Mn(2+) as a cofactor.

The enzyme catalyses Release of any N-terminal amino acid, including proline, that is linked to proline, even from a dipeptide or tripeptide.. Its function is as follows. Catalyzes the removal of a penultimate prolyl residue from the N-termini of peptides. The polypeptide is Probable Xaa-Pro aminopeptidase P (AMPP) (Paracoccidioides brasiliensis (strain Pb18)).